The following is a 727-amino-acid chain: Sodium-dependent neutral amino acid transporter SLC6A17 (727 aa).

The Cytoplasmic segment spans residues 1-68; that stretch reads MPKNSKVTQR…DRPAWNSKLQ (68 aa). Phosphoserine is present on residues Ser13 and Ser20. Residues 69–89 form a helical membrane-spanning segment; it reads YILAQIGFSVGLGNIWRFPYL. At 90 to 96 the chain is on the extracellular side; that stretch reads CQKNGGG. Residues 97–116 form a helical membrane-spanning segment; that stretch reads AYLVPYLVLLIIIGIPLFFL. The Cytoplasmic segment spans residues 117–140; sequence ELAVGQRIRRGSIGVWHYVCPRLG. Residues 141–161 form a helical membrane-spanning segment; that stretch reads GIGFSSCIVCLFVGLYYNVII. Residues 162-224 are Extracellular-facing; sequence GWSVFYFFKS…NSISESGGLN (63 aa). An N-linked (GlcNAc...) asparagine glycan is attached at Asn186. A helical membrane pass occupies residues 225-243; it reads WKMTLCLLVAWSIVGMAVV. Over 244–251 the chain is Cytoplasmic; that stretch reads KGIQSSGK. A helical transmembrane segment spans residues 252–269; that stretch reads VMYFSSLFPYVVLACFLV. At 270–304 the chain is on the extracellular side; sequence RGLLLRGAVDGILHMFTPKLDKMLDPQVWREAATQ. The helical transmembrane segment at 305 to 322 threads the bilayer; the sequence is VFFALGLGFGGVIAFSSY. Residues 323–333 lie on the Cytoplasmic side of the membrane; that stretch reads NKQDNNCHFDA. The chain crosses the membrane as a helical span at residues 334–355; that stretch reads ALVSFINFFTSVLATLVVFAVL. The Extracellular portion of the chain corresponds to 356–451; that stretch reads GFKANIMNEK…FIAFTEAMTH (96 aa). A Phosphotyrosine modification is found at Tyr377. Asn393 carries an N-linked (GlcNAc...) asparagine glycan. A helical transmembrane segment spans residues 452–471; that stretch reads FPASPFWSVMFFLMLINLGL. At 472 to 494 the chain is on the cytoplasmic side; it reads GSMIGTMAGITTPIIDTFKVPKE. Residues 495–513 traverse the membrane as a helical segment; the sequence is MFTVGCCVFAFFVGLLFVQ. Residues 514–528 lie on the Extracellular side of the membrane; it reads RSGNYFVTMFDDYSA. The helical transmembrane segment at 529 to 549 threads the bilayer; that stretch reads TLPLTVIVILENIAVAWIYGT. The Cytoplasmic portion of the chain corresponds to 550–569; it reads KKFMQELTEMLGFQPYRFYF. Residues 570 to 591 traverse the membrane as a helical segment; that stretch reads YMWKFVSPLCMAVLTTASIIQL. The Extracellular portion of the chain corresponds to 592–618; the sequence is GVSPPGYSAWIKEEAAERYLYFPNWAM. The chain crosses the membrane as a helical span at residues 619-641; sequence ALLITLIAVATLPIPVVFILRHF. Over 642–727 the chain is Cytoplasmic; sequence HLLSDGSNTL…LLASTPESEL (86 aa). Phosphoserine occurs at positions 665 and 701. Residues 680–727 are disordered; the sequence is VPSEAPSPMPTHRSYLGPGSTSPLDNSNNPNGRYGSGYLLASTPESEL. The span at 698–710 shows a compositional bias: polar residues; the sequence is GSTSPLDNSNNPN.

This sequence belongs to the sodium:neurotransmitter symporter (SNF) (TC 2.A.22) family. In terms of tissue distribution, expressed in the brain. The strongest expression levels in embryonic, postnatal, and adult stages are found in both cortical and hippocampal tissues.

The protein localises to the cytoplasmic vesicle. The protein resides in the secretory vesicle. It is found in the synaptic vesicle membrane. It localises to the postsynapse. Its subcellular location is the presynapse. The catalysed reaction is L-proline(in) + Na(+)(in) = L-proline(out) + Na(+)(out). It catalyses the reaction L-leucine(in) + Na(+)(in) = L-leucine(out) + Na(+)(out). The enzyme catalyses glycine(in) + Na(+)(in) = glycine(out) + Na(+)(out). It carries out the reaction L-alanine(in) + Na(+)(in) = L-alanine(out) + Na(+)(out). The catalysed reaction is L-glutamine(in) + Na(+)(in) = L-glutamine(out) + Na(+)(out). Its function is as follows. Synaptic vesicle transporter with apparent selectivity for neutral amino acids. The transport is sodium-coupled but chloride-independent, likely driven by the proton electrochemical gradient generated by vacuolar H(+)-ATPase in an overall electrogenic mechanism. May contribute to the synaptic uptake of neurotransmitter precursors in a process coupled in part to vesicle exocytosis. The sequence is that of Sodium-dependent neutral amino acid transporter SLC6A17 from Mus musculus (Mouse).